The chain runs to 528 residues: Glucose-6-phosphate isomerase (528 aa).

Glu-322 (proton donor) is an active-site residue. Catalysis depends on residues His-351 and Lys-455.

The protein belongs to the GPI family.

The protein resides in the cytoplasm. It catalyses the reaction alpha-D-glucose 6-phosphate = beta-D-fructose 6-phosphate. The protein operates within carbohydrate biosynthesis; gluconeogenesis. Its pathway is carbohydrate degradation; glycolysis; D-glyceraldehyde 3-phosphate and glycerone phosphate from D-glucose: step 2/4. Its function is as follows. Catalyzes the reversible isomerization of glucose-6-phosphate to fructose-6-phosphate. This chain is Glucose-6-phosphate isomerase, found in Nostoc punctiforme (strain ATCC 29133 / PCC 73102).